The chain runs to 263 residues: tRNA pseudouridine synthase A (263 aa).

The Nucleophile role is filled by Asp-51. Position 106 (Tyr-106) interacts with substrate.

It belongs to the tRNA pseudouridine synthase TruA family.

The catalysed reaction is uridine(38/39/40) in tRNA = pseudouridine(38/39/40) in tRNA. In terms of biological role, formation of pseudouridine at positions 38, 39 and 40 in the anticodon stem and loop of transfer RNAs. The sequence is that of tRNA pseudouridine synthase A from Pyrococcus abyssi (strain GE5 / Orsay).